The sequence spans 275 residues: Adenosylcobinamide-GDP ribazoletransferase (275 aa).

6 consecutive transmembrane segments (helical) span residues 53–73 (WFVF…TISL), 113–133 (VGSF…LGVS), 144–164 (LPFT…LYFV), 204–224 (FACI…PYFL), 225–245 (LSLL…KRWI), and 253–273 (LGAV…FVWI).

Belongs to the CobS family. Mg(2+) serves as cofactor.

It is found in the cell inner membrane. The catalysed reaction is alpha-ribazole + adenosylcob(III)inamide-GDP = adenosylcob(III)alamin + GMP + H(+). The enzyme catalyses alpha-ribazole 5'-phosphate + adenosylcob(III)inamide-GDP = adenosylcob(III)alamin 5'-phosphate + GMP + H(+). Its pathway is cofactor biosynthesis; adenosylcobalamin biosynthesis; adenosylcobalamin from cob(II)yrinate a,c-diamide: step 7/7. Its function is as follows. Joins adenosylcobinamide-GDP and alpha-ribazole to generate adenosylcobalamin (Ado-cobalamin). Also synthesizes adenosylcobalamin 5'-phosphate from adenosylcobinamide-GDP and alpha-ribazole 5'-phosphate. In Leptospira biflexa serovar Patoc (strain Patoc 1 / Ames), this protein is Adenosylcobinamide-GDP ribazoletransferase.